The sequence spans 538 residues: Cytochrome P450 18a1 (538 aa).

The helical transmembrane segment at 24–44 (QHLLMVFLGLLALVTLLQWLV) threads the bilayer. Cys466 provides a ligand contact to heme.

It belongs to the cytochrome P450 family. Heme is required as a cofactor. Expressed in body wall (epidermal and muscle cells) and mid- and hind-gut.

It localises to the endoplasmic reticulum membrane. The protein resides in the microsome membrane. Probably involved in steroid hormones biosynthesis. The chain is Cytochrome P450 18a1 (Cyp18a1) from Drosophila melanogaster (Fruit fly).